The following is a 298-amino-acid chain: GTPase Era (298 aa).

The region spanning 3–170 (KSGFVAILGR…VQLLKDNLEE (168 aa)) is the Era-type G domain. Residues 11–18 (GRPNVGKS) are G1. Position 11 to 18 (11 to 18 (GRPNVGKS)) interacts with GTP. Residues 37–41 (QSTRN) are G2. Residues 58 to 61 (DTPG) are G3. GTP contacts are provided by residues 58 to 62 (DTPGI) and 120 to 123 (NKID). Positions 120-123 (NKID) are G4. Positions 149 to 151 (ISA) are G5. Residues 201–279 (TQQEVPHSVA…YLETWVKVKK (79 aa)) form the KH type-2 domain.

Belongs to the TRAFAC class TrmE-Era-EngA-EngB-Septin-like GTPase superfamily. Era GTPase family. As to quaternary structure, monomer.

The protein localises to the cytoplasm. Its subcellular location is the cell membrane. In terms of biological role, an essential GTPase that binds both GDP and GTP, with rapid nucleotide exchange. Plays a role in 16S rRNA processing and 30S ribosomal subunit biogenesis and possibly also in cell cycle regulation and energy metabolism. The chain is GTPase Era from Streptococcus equi subsp. zooepidemicus (strain H70).